The sequence spans 210 residues: Pyrrolidone-carboxylate peptidase (210 aa).

Catalysis depends on residues Glu80, Cys143, and His162.

It belongs to the peptidase C15 family. Homotetramer.

The protein localises to the cytoplasm. It carries out the reaction Release of an N-terminal pyroglutamyl group from a polypeptide, the second amino acid generally not being Pro.. Functionally, removes 5-oxoproline from various penultimate amino acid residues except L-proline. The chain is Pyrrolidone-carboxylate peptidase from Chromobacterium violaceum (strain ATCC 12472 / DSM 30191 / JCM 1249 / CCUG 213 / NBRC 12614 / NCIMB 9131 / NCTC 9757 / MK).